The following is a 1412-amino-acid chain: ABC transporter C family member 3 (1412 aa).

Residues 1–34 (MELEEVGVEANQPNNDQGSKKQNKNKDKKVKKEK) form a disordered region. Positions 21–34 (KQNKNKDKKVKKEK) are enriched in basic residues. The next 6 membrane-spanning stretches (helical) occupy residues 115 to 135 (FGLY…SQFV), 161 to 181 (MGYY…VCLY), 236 to 256 (VFQL…CLAL), 261 to 281 (IGWP…FNGI), 346 to 366 (AMLI…VFSS), and 379 to 399 (IFAA…LPII). In terms of domain architecture, ABC transmembrane type-1 1 spans 119–405 (FVLSWFFYAI…LPIIVALGIQ (287 aa)). The region spanning 439–662 (IRDATLTWNQ…QKEFSGLLQA (224 aa)) is the ABC transporter 1 domain. 474–481 (GSVGSGKS) provides a ligand contact to ATP. The next 5 membrane-spanning stretches (helical) occupy residues 724–744 (WKYI…FFLM), 787–807 (IYIG…FLFF), 854–874 (NLMA…VATL), 875–895 (IIIS…CIIF), and 967–987 (WLGL…CLFI). The 291-residue stretch at 735-1025 (FLMAFIFFLM…ATLQAADTET (291 aa)) folds into the ABC transmembrane type-1 2 domain. Residues 1062 to 1296 (ITFDNLVMRY…PAGLLNWLVE (235 aa)) enclose the ABC transporter 2 domain. Residue 1096–1103 (GRTGAGKS) coordinates ATP. The tract at residues 1316 to 1412 (GVNIDQITPP…DNDNSEAGDN (97 aa)) is disordered. Residues 1342–1351 (NINSPPQQSL) show a composition bias toward polar residues. Low complexity predominate over residues 1367–1397 (DNNNNNNNNNNNNNNNNNNNNNNNNNNNNND). Acidic residues predominate over residues 1398-1412 (NDNDNDNDNSEAGDN).

This sequence belongs to the ABC transporter superfamily. ABCC family. Conjugate transporter (TC 3.A.1.208) subfamily.

It is found in the membrane. This is ABC transporter C family member 3 (abcC3) from Dictyostelium discoideum (Social amoeba).